The chain runs to 242 residues: Small ribosomal subunit protein uS2 (242 aa).

This sequence belongs to the universal ribosomal protein uS2 family.

The sequence is that of Small ribosomal subunit protein uS2 from Pseudoalteromonas translucida (strain TAC 125).